The primary structure comprises 359 residues: Alanine racemase (359 aa).

Catalysis depends on Lys35, which acts as the Proton acceptor; specific for D-alanine. Position 35 is an N6-(pyridoxal phosphate)lysine (Lys35). Residue Arg131 coordinates substrate. Tyr253 acts as the Proton acceptor; specific for L-alanine in catalysis. Met301 is a substrate binding site.

The protein belongs to the alanine racemase family. It depends on pyridoxal 5'-phosphate as a cofactor.

It carries out the reaction L-alanine = D-alanine. It functions in the pathway amino-acid biosynthesis; D-alanine biosynthesis; D-alanine from L-alanine: step 1/1. Catalyzes the interconversion of L-alanine and D-alanine. May also act on other amino acids. This chain is Alanine racemase (alr), found in Laribacter hongkongensis (strain HLHK9).